Consider the following 351-residue polypeptide: Mediator of RNA polymerase II transcription subunit 18 (351 aa).

The disordered stretch occupies residues 153-231 (GNGDPIDIDT…LPQSLSNGVS (79 aa)). The segment covering 163–204 (NNDKQGDNNTDKPKQEHDGKLPEAIDEDIIKNGDEKKTTHDD) has biased composition (basic and acidic residues). Residues 205–216 (NDSDIMEIDEPN) are compositionally biased toward acidic residues. The segment covering 217–231 (PETQTLPQSLSNGVS) has biased composition (polar residues).

Belongs to the Mediator complex subunit 18 family. Component of the Mediator complex.

Its subcellular location is the nucleus. Functionally, component of the Mediator complex, a coactivator involved in the regulated transcription of nearly all RNA polymerase II-dependent genes. Mediator functions as a bridge to convey information from gene-specific regulatory proteins to the basal RNA polymerase II transcription machinery. Mediator is recruited to promoters by direct interactions with regulatory proteins and serves as a scaffold for the assembly of a functional preinitiation complex with RNA polymerase II and the general transcription factors. This chain is Mediator of RNA polymerase II transcription subunit 18 (SRB5), found in Candida albicans (strain SC5314 / ATCC MYA-2876) (Yeast).